The primary structure comprises 95 residues: FXYD domain-containing ion transport regulator 6 (95 aa).

An N-terminal signal peptide occupies residues 1–18 (MELVLVFLCSLLAPMVLA). Residues 19-35 (SAAEKEKEMDPFHYDYQ) lie on the Extracellular side of the membrane. A helical transmembrane segment spans residues 36 to 57 (TLRIGGLVFAVVLFSVGILLIL). Topologically, residues 58–95 (SRRCKCSFNQKPRAPGDEEAQVENLITANATEPQKAEN) are cytoplasmic. Residues 69 to 95 (PRAPGDEEAQVENLITANATEPQKAEN) are disordered.

This sequence belongs to the FXYD family. As to quaternary structure, regulatory subunit of the sodium/potassium-transporting ATPase which is composed of a catalytic alpha subunit, a non-catalytic beta subunit and an additional regulatory subunit. The regulatory subunit, a member of the FXYD protein family, modulates the enzymatic activity in a tissue- and isoform-specific way by changing affinities of the Na+/K+-ATPase toward Na(+), K(+) or ATP.

It is found in the cell membrane. Its function is as follows. Associates with and regulates the activity of the sodium/potassium-transporting ATPase (NKA) which catalyzes the hydrolysis of ATP coupled with the exchange of Na(+) and K(+) ions across the plasma membrane. Reduces the apparent affinity for intracellular Na(+) with no change in the apparent affinity for extracellular K(+). In addition to modulating NKA kinetics, may also function as a regulator of NKA localization to the plasma membrane. The sequence is that of FXYD domain-containing ion transport regulator 6 from Homo sapiens (Human).